Reading from the N-terminus, the 256-residue chain is MLHIADKTFDSHLFTGTGKFASSQLMVESIRASGSQLVTLAMKRVDLRQHNDAILEPLIAAGVTLLPNTSGAKTAEEAIFAAHLAREALGTNWLKLEIHPDARWLLPDPIETLKAAETLVQQGFVVLPYCGADPVLCKRLEEVGCAAVMPLGAPIGSNQGLETRAMLEIIIQQATVPVVVDAGIGVPSHAAQALEMGADAVLVNTAIAVADDPVNMAKAFRLAVEAGLLARQSGPGSRSHFAHATSPLTGFLEASA.

Lysine 95 (schiff-base intermediate with DXP) is an active-site residue. Residues glycine 156, 182–183 (AG), and 204–205 (NT) contribute to the 1-deoxy-D-xylulose 5-phosphate site.

It belongs to the ThiG family. Homotetramer. Forms heterodimers with either ThiH or ThiS.

It is found in the cytoplasm. The enzyme catalyses [ThiS sulfur-carrier protein]-C-terminal-Gly-aminoethanethioate + 2-iminoacetate + 1-deoxy-D-xylulose 5-phosphate = [ThiS sulfur-carrier protein]-C-terminal Gly-Gly + 2-[(2R,5Z)-2-carboxy-4-methylthiazol-5(2H)-ylidene]ethyl phosphate + 2 H2O + H(+). The protein operates within cofactor biosynthesis; thiamine diphosphate biosynthesis. Functionally, catalyzes the rearrangement of 1-deoxy-D-xylulose 5-phosphate (DXP) to produce the thiazole phosphate moiety of thiamine. Sulfur is provided by the thiocarboxylate moiety of the carrier protein ThiS. In vitro, sulfur can be provided by H(2)S. In Escherichia coli O127:H6 (strain E2348/69 / EPEC), this protein is Thiazole synthase.